Consider the following 264-residue polypeptide: ATP synthase subunit a (264 aa).

The next 6 helical transmembrane spans lie at 29-49 (TWHI…LWIF), 87-107 (NALI…MNFM), 134-154 (DVNI…YYSI), 177-197 (IPVN…SLAL), 208-228 (LIFI…SLGV), and 235-255 (LIFH…LTIV).

The protein belongs to the ATPase A chain family. As to quaternary structure, F-type ATPases have 2 components, CF(1) - the catalytic core - and CF(0) - the membrane proton channel. CF(1) has five subunits: alpha(3), beta(3), gamma(1), delta(1), epsilon(1). CF(0) has three main subunits: a(1), b(2) and c(9-12). The alpha and beta chains form an alternating ring which encloses part of the gamma chain. CF(1) is attached to CF(0) by a central stalk formed by the gamma and epsilon chains, while a peripheral stalk is formed by the delta and b chains.

The protein localises to the cell inner membrane. Its function is as follows. Key component of the proton channel; it plays a direct role in the translocation of protons across the membrane. In Shewanella sp. (strain ANA-3), this protein is ATP synthase subunit a.